The primary structure comprises 339 residues: DNA-directed RNA polymerase subunit alpha (339 aa).

An alpha N-terminal domain (alpha-NTD) region spans residues 1-233 (MVREEVAGST…DLFLPFLHAE (233 aa)). The tract at residues 264-339 (KKGIPLNCIF…IDLLKNKLSF (76 aa)) is alpha C-terminal domain (alpha-CTD).

Belongs to the RNA polymerase alpha chain family. In plastids the minimal PEP RNA polymerase catalytic core is composed of four subunits: alpha, beta, beta', and beta''. When a (nuclear-encoded) sigma factor is associated with the core the holoenzyme is formed, which can initiate transcription.

It localises to the plastid. The protein resides in the chloroplast. It carries out the reaction RNA(n) + a ribonucleoside 5'-triphosphate = RNA(n+1) + diphosphate. DNA-dependent RNA polymerase catalyzes the transcription of DNA into RNA using the four ribonucleoside triphosphates as substrates. The chain is DNA-directed RNA polymerase subunit alpha from Thinopyrum bessarabicum (Wheatgrass).